Here is a 390-residue protein sequence, read N- to C-terminus: GTPase Obg (390 aa).

The region spanning 1–159 (MKFVDEASIL…RDLLLELMLL (159 aa)) is the Obg domain. The interval 127 to 147 (NTRFKSSVNRTPRQKTNGTPG) is disordered. Over residues 129–145 (RFKSSVNRTPRQKTNGT) the composition is skewed to polar residues. Positions 160–333 (ADVGMLGMPN…LCWDVMTFII (174 aa)) constitute an OBG-type G domain. GTP-binding positions include 166-173 (GMPNAGKS), 191-195 (FTTLV), 213-216 (DIPG), 283-286 (NKID), and 314-316 (SAA). Mg(2+)-binding residues include Ser-173 and Thr-193.

The protein belongs to the TRAFAC class OBG-HflX-like GTPase superfamily. OBG GTPase family. Monomer. Mg(2+) is required as a cofactor.

The protein localises to the cytoplasm. Its function is as follows. An essential GTPase which binds GTP, GDP and possibly (p)ppGpp with moderate affinity, with high nucleotide exchange rates and a fairly low GTP hydrolysis rate. Plays a role in control of the cell cycle, stress response, ribosome biogenesis and in those bacteria that undergo differentiation, in morphogenesis control. The chain is GTPase Obg from Salmonella gallinarum (strain 287/91 / NCTC 13346).